Reading from the N-terminus, the 173-residue chain is uncharacterized protein (173 aa).

One can recognise an MSP domain in the interval 16–133 (DLVLRPETIT…KHVLIRFPNK (118 aa)). Residues 141-163 (KKMEEDDMKQQKERNKLSNEKMG) are compositionally biased toward basic and acidic residues. A disordered region spans residues 141–173 (KKMEEDDMKQQKERNKLSNEKMGIRNQNMGEKK).

This is an uncharacterized protein from Caenorhabditis elegans.